Here is a 262-residue protein sequence, read N- to C-terminus: Nurim (262 aa).

Residues methionine 1–alanine 4 lie on the Nuclear side of the membrane. The helical transmembrane segment at leucine 5–phenylalanine 28 threads the bilayer. Residues threonine 29 to serine 58 lie on the Perinuclear space side of the membrane. A helical transmembrane segment spans residues isoleucine 59 to methionine 80. Residues alanine 81–glutamine 97 are Nuclear-facing. A helical membrane pass occupies residues arginine 98–arginine 114. Residues tyrosine 115–tryptophan 133 lie on the Perinuclear space side of the membrane. A helical transmembrane segment spans residues alanine 134–leucine 164. Over methionine 165–leucine 191 the chain is Nuclear. A helical membrane pass occupies residues phenylalanine 192–valine 210. Residues proline 211–aspartate 216 are Perinuclear space-facing. The helical transmembrane segment at arginine 217–leucine 234 threads the bilayer. The Nuclear segment spans residues aspartate 235–glutamate 262.

It belongs to the nurim family.

The protein resides in the nucleus inner membrane. This chain is Nurim (NRM), found in Bos taurus (Bovine).